Here is an 855-residue protein sequence, read N- to C-terminus: Suppressor of tumorigenicity 14 protein (855 aa).

The disordered stretch occupies residues 1–20 (MGSDRARKGGGGPKDFGAGL). Residues 1–55 (MGSDRARKGGGGPKDFGAGLKYNSRHEKVNGLEEGVEFLPVNNVKKVEKHGPGRW) are Cytoplasmic-facing. A helical; Signal-anchor for type II membrane protein membrane pass occupies residues 56 to 76 (VVLAAVLIGLLLVLLGIGFLV). Over 77–855 (WHLQYRDVRV…RDWIKENTGV (779 aa)) the chain is Extracellular. The SEA domain occupies 86–203 (VQKVFNGYMR…TSVVAFPTDS (118 aa)). The N-linked (GlcNAc...) asparagine glycan is linked to asparagine 109. A disulfide bond links cysteine 214 and cysteine 244. 2 consecutive CUB domains span residues 214–334 (CSFG…FFQL) and 340–447 (CGGR…YLSY). N-linked (GlcNAc...) asparagine glycosylation occurs at asparagine 302. 15 cysteine pairs are disulfide-bonded: cysteine 340–cysteine 366, cysteine 397–cysteine 410, cysteine 453–cysteine 464, cysteine 459–cysteine 477, cysteine 471–cysteine 486, cysteine 488–cysteine 501, cysteine 496–cysteine 514, cysteine 508–cysteine 523, cysteine 525–cysteine 537, cysteine 532–cysteine 550, cysteine 544–cysteine 559, cysteine 567–cysteine 579, cysteine 574–cysteine 593, cysteine 587–cysteine 602, and cysteine 641–cysteine 657. LDL-receptor class A domains lie at 452-487 (PCPGQFTCRTGRCIRKELRCDGWADCTDHSDELNCS), 487-524 (SCDAGHQFTCKNKFCKPLFWVCDSVNDCGDNSDEQGCS), 524-560 (SCPAQTFRCSNGKCLSKSQQCNGKDDCGDGSDEASCP), and 566-603 (TCTKHTYRCLNGLCLSKGNPECDGKEDCSDGSDEKDCD). N-linked (GlcNAc...) asparagine glycosylation occurs at asparagine 485. Positions 615–854 (VVGGTDADEG…FRDWIKENTG (240 aa)) constitute a Peptidase S1 domain. Active-site charge relay system residues include histidine 656 and aspartate 711. An N-linked (GlcNAc...) asparagine glycan is attached at asparagine 772. Disulfide bonds link cysteine 776–cysteine 790 and cysteine 801–cysteine 830. Residue serine 805 is the Charge relay system of the active site.

The protein belongs to the peptidase S1 family. In terms of assembly, interacts with CDCP1. May interact with TMEFF1. Interacts with iripin-3, a serine protease inhibitor from Ixodes ricinus saliva. Interacts with iripin-1, a serine protease inhibitor from Ixodes ricinus saliva.

The protein resides in the membrane. It catalyses the reaction Cleaves various synthetic substrates with Arg or Lys at the P1 position and prefers small side-chain amino acids, such as Ala and Gly, at the P2 position.. In terms of biological role, exhibits trypsin-like activity as defined by cleavage of synthetic substrates with Arg or Lys as the P1 site. Involved in the terminal differentiation of keratinocytes through prostasin (PRSS8) activation and filaggrin (FLG) processing. Proteolytically cleaves and therefore activates TMPRSS13. This Homo sapiens (Human) protein is Suppressor of tumorigenicity 14 protein (ST14).